We begin with the raw amino-acid sequence, 268 residues long: Tryptophan synthase alpha chain (268 aa).

Catalysis depends on proton acceptor residues Glu-49 and Asp-60.

Belongs to the TrpA family. Tetramer of two alpha and two beta chains.

The catalysed reaction is (1S,2R)-1-C-(indol-3-yl)glycerol 3-phosphate + L-serine = D-glyceraldehyde 3-phosphate + L-tryptophan + H2O. The protein operates within amino-acid biosynthesis; L-tryptophan biosynthesis; L-tryptophan from chorismate: step 5/5. Functionally, the alpha subunit is responsible for the aldol cleavage of indoleglycerol phosphate to indole and glyceraldehyde 3-phosphate. This chain is Tryptophan synthase alpha chain, found in Pseudomonas aeruginosa (strain UCBPP-PA14).